A 244-amino-acid polypeptide reads, in one-letter code: Phosphoadenosine 5'-phosphosulfate reductase (244 aa).

The active-site Nucleophile; cysteine thiosulfonate intermediate is Cys-239.

This sequence belongs to the PAPS reductase family. CysH subfamily.

It localises to the cytoplasm. It catalyses the reaction [thioredoxin]-disulfide + sulfite + adenosine 3',5'-bisphosphate + 2 H(+) = [thioredoxin]-dithiol + 3'-phosphoadenylyl sulfate. It functions in the pathway sulfur metabolism; hydrogen sulfide biosynthesis; sulfite from sulfate: step 3/3. Functionally, catalyzes the formation of sulfite from phosphoadenosine 5'-phosphosulfate (PAPS) using thioredoxin as an electron donor. This Salmonella heidelberg (strain SL476) protein is Phosphoadenosine 5'-phosphosulfate reductase.